We begin with the raw amino-acid sequence, 87 residues long: LYR motif-containing protein 2 (87 aa).

The N-terminal 19 residues, 1-19, are a transit peptide targeting the mitochondrion; sequence MGSRLPPAALTLKQFLVRQ.

It belongs to the complex I LYR family.

The protein localises to the mitochondrion. Its function is as follows. Involved in efficient integration of the N-module into mitochondrial respiratory chain complex I. The polypeptide is LYR motif-containing protein 2 (lyrm2) (Xenopus laevis (African clawed frog)).